Consider the following 66-residue polypeptide: Large ribosomal subunit protein bL33c (66 aa).

This sequence belongs to the bacterial ribosomal protein bL33 family.

It is found in the plastid. The protein localises to the chloroplast. The chain is Large ribosomal subunit protein bL33c from Dioscorea elephantipes (Elephant's foot yam).